The sequence spans 278 residues: Ribosomal RNA small subunit methyltransferase A (278 aa).

Residues Asn-18, Leu-20, Gly-45, Glu-66, Asp-89, and Asn-110 each coordinate S-adenosyl-L-methionine.

The protein belongs to the class I-like SAM-binding methyltransferase superfamily. rRNA adenine N(6)-methyltransferase family. RsmA subfamily.

The protein resides in the cytoplasm. The enzyme catalyses adenosine(1518)/adenosine(1519) in 16S rRNA + 4 S-adenosyl-L-methionine = N(6)-dimethyladenosine(1518)/N(6)-dimethyladenosine(1519) in 16S rRNA + 4 S-adenosyl-L-homocysteine + 4 H(+). In terms of biological role, specifically dimethylates two adjacent adenosines (A1518 and A1519) in the loop of a conserved hairpin near the 3'-end of 16S rRNA in the 30S particle. May play a critical role in biogenesis of 30S subunits. The chain is Ribosomal RNA small subunit methyltransferase A from Cupriavidus metallidurans (strain ATCC 43123 / DSM 2839 / NBRC 102507 / CH34) (Ralstonia metallidurans).